A 310-amino-acid polypeptide reads, in one-letter code: 4-hydroxyproline 2-epimerase (310 aa).

The Proton acceptor role is filled by Cys-88. Residues 89-90 (GH), His-208, and Asp-232 each bind substrate. Cys-236 serves as the catalytic Proton donor. 237–238 (GT) is a substrate binding site.

The protein belongs to the proline racemase family.

It catalyses the reaction trans-4-hydroxy-L-proline = cis-4-hydroxy-D-proline. In terms of biological role, catalyzes the epimerization of trans-4-hydroxy-L-proline (t4LHyp) to cis-4-hydroxy-D-proline (c4DHyp). Is likely involved in a degradation pathway that converts t4LHyp to alpha-ketoglutarate. Displays no proline racemase activity. The chain is 4-hydroxyproline 2-epimerase from Acinetobacter baumannii (strain ATCC 17978 / DSM 105126 / CIP 53.77 / LMG 1025 / NCDC KC755 / 5377).